Consider the following 708-residue polypeptide: Exocyst complex component 8 (708 aa).

Residues 168 to 268 (YLVYNGDLLE…WLEVLEETKR (101 aa)) form the PH domain. The span at 271 to 282 (ALSEKRRLEQEA) shows a compositional bias: basic and acidic residues. Positions 271–314 (ALSEKRRLEQEALPRPAPTPPESTNPFEEEEEEEEEPSAEEEAV) are disordered. A compositionally biased stretch (acidic residues) spans 297 to 314 (FEEEEEEEEEPSAEEEAV).

Belongs to the EXO84 family. The exocyst complex is composed of EXOC1, EXOC2, EXOC3, EXOC4, EXOC5, EXOC6, EXOC7 and EXOC8.

The protein resides in the cytoplasm. Its subcellular location is the perinuclear region. It localises to the cell projection. It is found in the growth cone. Functionally, component of the exocyst complex involved in the docking of exocytic vesicles with fusion sites on the plasma membrane. This is Exocyst complex component 8 (EXOC8) from Gallus gallus (Chicken).